We begin with the raw amino-acid sequence, 407 residues long: 41 kDa spicule matrix protein (407 aa).

The signal sequence occupies residues 1–17 (MKGVLFIVASLVAFATG). Residues 29-160 (SGQSCYRYFN…PGRAPVMKRQ (132 aa)) form the C-type lectin domain. 2 disordered regions span residues 143-176 (PQNP…IPQG) and 204-407 (IGQQ…DALA). Positions 223–369 (NQPGMGGRQP…MGGRQPGMGG (147 aa)) are enriched in gly residues. Over residues 370-398 (QQPNNPNNPNNPNNPNNPNNPNPRFNRPR) the composition is skewed to low complexity.

It belongs to the SM50 family. As to expression, expressed specifically in the micromere/primary mesenchyme cells (PMC) lineage.

The protein resides in the secreted. Functionally, major matrix protein of the sea urchin embryo spicule which directs crystal growth in certain orientations and inhibit growth in others. This chain is 41 kDa spicule matrix protein, found in Hemicentrotus pulcherrimus (Sea urchin).